Reading from the N-terminus, the 72-residue chain is Translation initiation factor IF-1 (72 aa).

An S1-like domain is found at 1–72 (MAKEEMLEFP…TKGRINYRFK (72 aa)).

It belongs to the IF-1 family. In terms of assembly, component of the 30S ribosomal translation pre-initiation complex which assembles on the 30S ribosome in the order IF-2 and IF-3, IF-1 and N-formylmethionyl-tRNA(fMet); mRNA recruitment can occur at any time during PIC assembly.

It is found in the cytoplasm. Functionally, one of the essential components for the initiation of protein synthesis. Stabilizes the binding of IF-2 and IF-3 on the 30S subunit to which N-formylmethionyl-tRNA(fMet) subsequently binds. Helps modulate mRNA selection, yielding the 30S pre-initiation complex (PIC). Upon addition of the 50S ribosomal subunit IF-1, IF-2 and IF-3 are released leaving the mature 70S translation initiation complex. The protein is Translation initiation factor IF-1 of Jannaschia sp. (strain CCS1).